Reading from the N-terminus, the 390-residue chain is DNA replication and repair protein RecF (390 aa).

30-37 (GDNAQGKS) is a binding site for ATP.

Belongs to the RecF family.

The protein resides in the cytoplasm. Its function is as follows. The RecF protein is involved in DNA metabolism; it is required for DNA replication and normal SOS inducibility. RecF binds preferentially to single-stranded, linear DNA. It also seems to bind ATP. The chain is DNA replication and repair protein RecF from Trichodesmium erythraeum (strain IMS101).